Reading from the N-terminus, the 323-residue chain is tRNA U34 carboxymethyltransferase (323 aa).

Carboxy-S-adenosyl-L-methionine-binding positions include Lys91, Trp105, Lys110, Gly130, 152–154 (DPT), 181–182 (IE), Met196, Tyr200, and Arg315.

It belongs to the class I-like SAM-binding methyltransferase superfamily. CmoB family. In terms of assembly, homotetramer.

The catalysed reaction is carboxy-S-adenosyl-L-methionine + 5-hydroxyuridine(34) in tRNA = 5-carboxymethoxyuridine(34) in tRNA + S-adenosyl-L-homocysteine + H(+). Its function is as follows. Catalyzes carboxymethyl transfer from carboxy-S-adenosyl-L-methionine (Cx-SAM) to 5-hydroxyuridine (ho5U) to form 5-carboxymethoxyuridine (cmo5U) at position 34 in tRNAs. In Photorhabdus laumondii subsp. laumondii (strain DSM 15139 / CIP 105565 / TT01) (Photorhabdus luminescens subsp. laumondii), this protein is tRNA U34 carboxymethyltransferase.